The following is a 339-amino-acid chain: MRVYYDRDADINLVKGKKVAIIGYGSQGHAHALNLRDSGVKEIAIALREGSSTAKKAEAEGLTVKTVVDAAQWADVVMVLTPDELQADIYHQLLAKNLKQGAALLFAHGLSVHFNLIEPRADLDVLMVAPKGPGHTVRSEYKRGGGVPCLIAVAQNASGNAHDIALSYASAIGGGRAGIIETTFKEECETDLFGEQAVLCGGLVELIRAGFETLVEAGYAPEMAYFECLHEVKLIVDLIYEGGIANMNYSISNTAEYGEYVTGPRIITPETKAEMKRVLEDIQGGKFTRDWMLENKVHQTSFKATRAKVAAHPIEKVGAELRAMMPWIGASKLVDKSKN.

The 182-residue stretch at 1 to 182 (MRVYYDRDAD…GGGRAGIIET (182 aa)) folds into the KARI N-terminal Rossmann domain. Residues 24 to 27 (YGSQ), Arg48, Ser51, Thr53, and 83 to 86 (DELQ) contribute to the NADP(+) site. Residue His108 is part of the active site. Gly134 is a binding site for NADP(+). The KARI C-terminal knotted domain occupies 183-328 (TFKEECETDL…AELRAMMPWI (146 aa)). Mg(2+) is bound by residues Asp191, Glu195, Glu227, and Glu231. Substrate is bound at residue Ser252.

This sequence belongs to the ketol-acid reductoisomerase family. Requires Mg(2+) as cofactor.

The enzyme catalyses (2R)-2,3-dihydroxy-3-methylbutanoate + NADP(+) = (2S)-2-acetolactate + NADPH + H(+). It catalyses the reaction (2R,3R)-2,3-dihydroxy-3-methylpentanoate + NADP(+) = (S)-2-ethyl-2-hydroxy-3-oxobutanoate + NADPH + H(+). The protein operates within amino-acid biosynthesis; L-isoleucine biosynthesis; L-isoleucine from 2-oxobutanoate: step 2/4. It participates in amino-acid biosynthesis; L-valine biosynthesis; L-valine from pyruvate: step 2/4. Involved in the biosynthesis of branched-chain amino acids (BCAA). Catalyzes an alkyl-migration followed by a ketol-acid reduction of (S)-2-acetolactate (S2AL) to yield (R)-2,3-dihydroxy-isovalerate. In the isomerase reaction, S2AL is rearranged via a Mg-dependent methyl migration to produce 3-hydroxy-3-methyl-2-ketobutyrate (HMKB). In the reductase reaction, this 2-ketoacid undergoes a metal-dependent reduction by NADPH to yield (R)-2,3-dihydroxy-isovalerate. The polypeptide is Ketol-acid reductoisomerase (NADP(+)) (Beijerinckia indica subsp. indica (strain ATCC 9039 / DSM 1715 / NCIMB 8712)).